The primary structure comprises 454 residues: uncharacterized protein (454 aa).

The segment at 1-25 (MHGPTSKAISRNVRSVKRPRRAPRP) is disordered. Over residues 14–23 (RSVKRPRRAP) the composition is skewed to basic residues.

The protein localises to the cytoplasm. It localises to the nucleus. This is an uncharacterized protein from Saccharomyces cerevisiae (strain ATCC 204508 / S288c) (Baker's yeast).